Here is a 155-residue protein sequence, read N- to C-terminus: Ribonuclease H (155 aa).

Residues 1 to 142 (MLKQVEIFTD…CDELARAAAM (142 aa)) form the RNase H type-1 domain. Asp10, Glu48, Asp70, and Asp134 together coordinate Mg(2+).

This sequence belongs to the RNase H family. In terms of assembly, monomer. Mg(2+) is required as a cofactor.

The protein resides in the cytoplasm. The enzyme catalyses Endonucleolytic cleavage to 5'-phosphomonoester.. Endonuclease that specifically degrades the RNA of RNA-DNA hybrids. The chain is Ribonuclease H from Salmonella paratyphi A (strain AKU_12601).